The following is a 745-amino-acid chain: Elongation factor G, mitochondrial (745 aa).

One can recognise a tr-type G domain in the interval 40–317; sequence ERIRNIGISA…AVLDYLPNPG (278 aa). GTP is bound by residues 49-56, 116-120, and 170-173; these read AHIDSGKT, DTPGH, and NKLD.

It belongs to the TRAFAC class translation factor GTPase superfamily. Classic translation factor GTPase family. EF-G/EF-2 subfamily.

The protein localises to the mitochondrion. It participates in protein biosynthesis; polypeptide chain elongation. Mitochondrial GTPase that catalyzes the GTP-dependent ribosomal translocation step during translation elongation. During this step, the ribosome changes from the pre-translocational (PRE) to the post-translocational (POST) state as the newly formed A-site-bound peptidyl-tRNA and P-site-bound deacylated tRNA move to the P and E sites, respectively. Catalyzes the coordinated movement of the two tRNA molecules, the mRNA and conformational changes in the ribosome. Essential during development as it acts as a retrograde signal from mitochondria to the nucleus to slow down cell proliferation if mitochondrial energy output is low. In Drosophila yakuba (Fruit fly), this protein is Elongation factor G, mitochondrial.